The chain runs to 968 residues: RNA polymerase-associated protein RapA (968 aa).

Residues 163 to 332 (EVGQRFAPRV…FARLRLLDPD (170 aa)) form the Helicase ATP-binding domain. 176 to 183 (DEVGLGKT) contributes to the ATP binding site. The short motif at 278-281 (DEAH) is the DEAH box element. Positions 491 to 645 (RVDWLIDFLK…TCPTGHILFN (155 aa)) constitute a Helicase C-terminal domain.

Belongs to the SNF2/RAD54 helicase family. RapA subfamily. As to quaternary structure, interacts with the RNAP. Has a higher affinity for the core RNAP than for the holoenzyme. Its ATPase activity is stimulated by binding to RNAP.

In terms of biological role, transcription regulator that activates transcription by stimulating RNA polymerase (RNAP) recycling in case of stress conditions such as supercoiled DNA or high salt concentrations. Probably acts by releasing the RNAP, when it is trapped or immobilized on tightly supercoiled DNA. Does not activate transcription on linear DNA. Probably not involved in DNA repair. The polypeptide is RNA polymerase-associated protein RapA (Shewanella loihica (strain ATCC BAA-1088 / PV-4)).